A 750-amino-acid polypeptide reads, in one-letter code: Meiosis protein mei2 (750 aa).

The interval 1–20 is disordered; it reads MIMETESPLSITSPSPSDST. A compositionally biased stretch (polar residues) spans 7-20; it reads SPLSITSPSPSDST. 2 consecutive RRM domains span residues 195–270 and 293–361; these read RYLF…FCQR and LLLN…CLQV.

As to quaternary structure, binds rad24 when phosphorylated. Inactivated by phosphorylation by ran1/pat1.

Its function is as follows. Crucial for commitment to meiosis but it is not sufficient itself for the commitment. May be a splicing regulator. The protein is Meiosis protein mei2 (mei2) of Schizosaccharomyces pombe (strain 972 / ATCC 24843) (Fission yeast).